A 404-amino-acid chain; its full sequence is Serine/threonine transporter SstT (404 aa).

8 consecutive transmembrane segments (helical) span residues 10-30 (ILGGNLVLRIAVGLVLGICLA), 53-73 (AIAPILVFVLVMASIANKEVG), 81-101 (ILVMYVLGTFVAAVTAVILSY), 140-160 (AITNGNFIGILAWSIGLGIAL), 177-197 (AVSFVVKVVIAFAPIGVFGLV), 215-235 (LLAVLLGAMAIVAFILNPLLV), 287-307 (IAIPLGANINMAGAAITITVL), and 329-349 (IVASICACGASGVAGGSLLLI).

It belongs to the dicarboxylate/amino acid:cation symporter (DAACS) (TC 2.A.23) family.

It is found in the cell inner membrane. It catalyses the reaction L-serine(in) + Na(+)(in) = L-serine(out) + Na(+)(out). The catalysed reaction is L-threonine(in) + Na(+)(in) = L-threonine(out) + Na(+)(out). Its function is as follows. Involved in the import of serine and threonine into the cell, with the concomitant import of sodium (symport system). This is Serine/threonine transporter SstT from Glaesserella parasuis serovar 5 (strain SH0165) (Haemophilus parasuis).